The primary structure comprises 717 residues: DNA ligase (717 aa).

NAD(+) contacts are provided by residues 44-48 (DAEYD), 93-94 (SL), and glutamate 127. Residue lysine 129 is the N6-AMP-lysine intermediate of the active site. Residues arginine 150, glutamate 186, lysine 302, and lysine 326 each coordinate NAD(+). Residues cysteine 431, cysteine 434, cysteine 455, and cysteine 461 each contribute to the Zn(2+) site. The 79-residue stretch at 639–717 (TSGSPVVGKT…EDEWLELIGG (79 aa)) folds into the BRCT domain.

Belongs to the NAD-dependent DNA ligase family. LigA subfamily. Mg(2+) serves as cofactor. Mn(2+) is required as a cofactor.

It carries out the reaction NAD(+) + (deoxyribonucleotide)n-3'-hydroxyl + 5'-phospho-(deoxyribonucleotide)m = (deoxyribonucleotide)n+m + AMP + beta-nicotinamide D-nucleotide.. Its function is as follows. DNA ligase that catalyzes the formation of phosphodiester linkages between 5'-phosphoryl and 3'-hydroxyl groups in double-stranded DNA using NAD as a coenzyme and as the energy source for the reaction. It is essential for DNA replication and repair of damaged DNA. The polypeptide is DNA ligase (Rhizobium rhizogenes (strain K84 / ATCC BAA-868) (Agrobacterium radiobacter)).